A 364-amino-acid chain; its full sequence is Peptide chain release factor 2 (364 aa).

Glutamine 251 is modified (N5-methylglutamine).

It belongs to the prokaryotic/mitochondrial release factor family. Methylated by PrmC. Methylation increases the termination efficiency of RF2.

It localises to the cytoplasm. Peptide chain release factor 2 directs the termination of translation in response to the peptide chain termination codons UGA and UAA. The chain is Peptide chain release factor 2 from Campylobacter hominis (strain ATCC BAA-381 / DSM 21671 / CCUG 45161 / LMG 19568 / NCTC 13146 / CH001A).